Reading from the N-terminus, the 1235-residue chain is Cullin-associated NEDD8-dissociated protein 2 (1235 aa).

Residue Ser-2 is modified to N-acetylserine. HEAT repeat units lie at residues 2-39 (STGA…KDSI), 44-81 (DSER…KVKE), 83-119 (QVEN…ELPP), 129-167 (NVCR…RLGA), 171-208 (TFHA…ACST), 210-246 (LFVE…SVGR), 254-291 (AHLD…KCPK), 326-367 (TEDS…SRPD), 371-408 (DFHC…HTRP), 431-468 (AQVP…VLPG), 516-553 (PHLP…TLWP), 564-603 (PYVG…HLGD), 607-644 (DDLE…LRLD), 647-684 (PILA…SQGL), 689-726 (PAVR…TQPS), 730-769 (EVSG…TRPP), 771-812 (VEYS…ALSA), 856-893 (GPQR…GNLP), 895-930 (FLPF…DNLK), 932-965 (YVED…LVFV), 966-1002 (NPPY…DQPH), 1006-1043 (PLLK…NKPS), 1047-1083 (DLLD…DDGL), 1104-1140 (LDMC…LCPA), 1156-1193 (TCTA…NPEV), and 1203-1235 (SAQI…MELS). Positions 314-345 (YDHDSDDEEQMETEDSEFSEQESEDEYSDDDD) are disordered. The span at 317 to 345 (DSDDEEQMETEDSEFSEQESEDEYSDDDD) shows a compositional bias: acidic residues.

It belongs to the CAND family. Binds TBP, CNOT3 and UBE3C. In terms of processing, ubiquitinated and targeted for proteasomal degradation. As to expression, highly expressed in embryonic limb buds.

The protein localises to the nucleus. Probable assembly factor of SCF (SKP1-CUL1-F-box protein) E3 ubiquitin ligase complexes that promotes the exchange of the substrate-recognition F-box subunit in SCF complexes, thereby playing a key role in the cellular repertoire of SCF complexes. This is Cullin-associated NEDD8-dissociated protein 2 (Cand2) from Mus musculus (Mouse).